The chain runs to 496 residues: Autophagy-related protein 21 (496 aa).

The stretch at 1–35 (MKVLQFNQDATCCVVAASSHQISIFNCDPFGKCFE) is one WD 1 repeat. The tract at residues 41–86 (SKKKTSNNNGTASNSESRNNEESILITNGSRDRTDAEEEEDNEDNA) is disordered. Residues 46-57 (SNNNGTASNSES) are compositionally biased toward low complexity. Positions 75–84 (DAEEEEDNED) are enriched in acidic residues. One copy of the WD 2 repeat lies at 148–190 (VMNRKRMCVLLESDQIFIYDISCMKPLETIDLWEDHYKRSQAN). The residue at position 213 (T213) is a Phosphothreonine. S237 is modified (phosphoserine). 3 WD repeats span residues 294 to 334 (VHKG…DYMS), 346 to 385 (TRLC…NSLP), and 448 to 488 (VNES…GECV). The short motif at 342-346 (FRRGT) is the L/FRRG motif element.

It belongs to the WD repeat PROPPIN family.

It localises to the cytoplasm. The protein localises to the vacuole membrane. Functionally, required for cytoplasm to vacuole transport (Cvt) vesicles formation and mitophagy. Involved in binding of phosphatidylethanolamine to ATG8 and in recruitment of ATG8 and ATG5 to the pre-autophagosomal structure. Protects ATG8 from ARG4-mediated cleavage. Essential for maturation of proaminopeptidase I. This chain is Autophagy-related protein 21 (ATG21), found in Saccharomyces cerevisiae (strain YJM789) (Baker's yeast).